Reading from the N-terminus, the 1093-residue chain is Protein translocase subunit SecA (1093 aa).

Residues Gln-84, 102–106 (GEGKT), and Asp-491 contribute to the ATP site. 2 disordered regions span residues 837-869 (QNLQ…SEHE) and 904-1062 (SELE…TSEA). 3 stretches are compositionally biased toward basic and acidic residues: residues 904–937 (SELE…DATK), 944–971 (EELK…EKLK), and 978–1062 (PKDL…TSEA).

This sequence belongs to the SecA family. In terms of assembly, monomer and homodimer. Part of the essential Sec protein translocation apparatus which comprises SecA, SecYEG and auxiliary proteins SecDF. Other proteins may also be involved.

Its subcellular location is the cell membrane. It localises to the cytoplasm. It carries out the reaction ATP + H2O + cellular proteinSide 1 = ADP + phosphate + cellular proteinSide 2.. Part of the Sec protein translocase complex. Interacts with the SecYEG preprotein conducting channel. Has a central role in coupling the hydrolysis of ATP to the transfer of proteins into and across the cell membrane, serving as an ATP-driven molecular motor driving the stepwise translocation of polypeptide chains across the membrane. The chain is Protein translocase subunit SecA from Mycoplasmopsis synoviae (strain 53) (Mycoplasma synoviae).